The primary structure comprises 79 residues: Acyl carrier protein (79 aa).

Positions 2-77 constitute a Carrier domain; that stretch reads SSIEERVKKI…QAVDYINKHL (76 aa). The residue at position 37 (serine 37) is an O-(pantetheine 4'-phosphoryl)serine.

This sequence belongs to the acyl carrier protein (ACP) family. In terms of processing, 4'-phosphopantetheine is transferred from CoA to a specific serine of apo-ACP by AcpS. This modification is essential for activity because fatty acids are bound in thioester linkage to the sulfhydryl of the prosthetic group.

The protein resides in the cytoplasm. It functions in the pathway lipid metabolism; fatty acid biosynthesis. Its function is as follows. Carrier of the growing fatty acid chain in fatty acid biosynthesis. The protein is Acyl carrier protein of Alkalilimnicola ehrlichii (strain ATCC BAA-1101 / DSM 17681 / MLHE-1).